Reading from the N-terminus, the 454-residue chain is Cathepsin C (454 aa).

The signal sequence occupies residues 1-20 (MHWVFHCILIILACLRFTCA). Positions 21-217 (DTPANCTYED…SKELISLTGN (197 aa)) are excised as a propeptide. Asn-25 is a glycosylation site (N-linked (GlcNAc...) asparagine). Intrachain disulfides connect Cys-26/Cys-107, Cys-244/Cys-287, and Cys-280/Cys-321. Cys-247 is an active-site residue. A glycan (N-linked (GlcNAc...) asparagine) is linked at Asn-265. Phe-291 contacts chloride. Residue Asn-326 is glycosylated (N-linked (GlcNAc...) asparagine). Tyr-337 is a binding site for chloride. Active-site residues include His-398 and Asn-420.

The protein belongs to the peptidase C1 family. The cofactor is chloride.

It localises to the lysosome. Functionally, thiol protease. Has a role as a digestive enzyme. The polypeptide is Cathepsin C (Schistosoma mansoni (Blood fluke)).